A 422-amino-acid polypeptide reads, in one-letter code: Beta-1,3-galactosyltransferase 2 (422 aa).

Topologically, residues 1–24 are cytoplasmic; that stretch reads MLQWRRRHCCFAKMTWNAKRSLFR. The chain crosses the membrane as a helical; Signal-anchor for type II membrane protein span at residues 25-45; it reads THLIGVLSLVFLFAMFLFFNH. Over 46 to 422 the chain is Lumenal; sequence HDWLPGRAGF…AGRYRHRKLH (377 aa). N-linked (GlcNAc...) asparagine glycosylation is found at Asn75, Asn100, Asn119, Asn176, and Asn226. The disordered stretch occupies residues 90–110; the sequence is TLRPQTATNSNNTDLSPQGVT.

The protein belongs to the glycosyltransferase 31 family. The cofactor is Mn(2+). As to expression, detected in heart and brain.

The protein localises to the golgi apparatus membrane. The catalysed reaction is an N-acetyl-beta-D-glucosaminyl derivative + UDP-alpha-D-galactose = a beta-D-galactosyl-(1-&gt;3)-N-acetyl-beta-D-glucosaminyl derivative + UDP + H(+). It carries out the reaction a beta-D-GlcNAc-(1-&gt;3)-beta-D-Gal-(1-&gt;4)-beta-D-Glc-(1&lt;-&gt;1)-Cer(d18:1(4E)) + UDP-alpha-D-galactose = a beta-D-Gal-(1-&gt;3)-beta-D-GlcNAc-(1-&gt;3)-beta-D-Gal-(1-&gt;4)-beta-D-Glc-(1&lt;-&gt;1')-Cer(d18:1(4E)) + UDP + H(+). The enzyme catalyses a neolactoside IV(3)-beta-GlcNAc-nLc4Cer(d18:1(4E)) + UDP-alpha-D-galactose = a neolactoside IV(3)-beta-[Gal-beta-(1-&gt;3)-GlcNAc]-nLc4Cer(d18:1(4E)) + UDP + H(+). It functions in the pathway protein modification; protein glycosylation. Beta-1,3-galactosyltransferase that transfers galactose from UDP-galactose to substrates with a terminal beta-N-acetylglucosamine (beta-GlcNAc) residue. Can also utilize substrates with a terminal galactose residue, albeit with lower efficiency. Involved in the biosynthesis of the carbohydrate moieties of glycolipids and glycoproteins. Inactive towards substrates with terminal alpha-N-acetylglucosamine (alpha-GlcNAc) or alpha-N-acetylgalactosamine (alpha-GalNAc) residues. This is Beta-1,3-galactosyltransferase 2 from Homo sapiens (Human).